Consider the following 342-residue polypeptide: tRNA dimethylallyltransferase (342 aa).

39–46 (GPTGSGKT) contacts ATP. 41 to 46 (TGSGKT) is a substrate binding site. An interaction with substrate tRNA region spans residues 64–67 (DSMQ).

The protein belongs to the IPP transferase family. Monomer. It depends on Mg(2+) as a cofactor.

The enzyme catalyses adenosine(37) in tRNA + dimethylallyl diphosphate = N(6)-dimethylallyladenosine(37) in tRNA + diphosphate. Catalyzes the transfer of a dimethylallyl group onto the adenine at position 37 in tRNAs that read codons beginning with uridine, leading to the formation of N6-(dimethylallyl)adenosine (i(6)A). In Chlamydia abortus (strain DSM 27085 / S26/3) (Chlamydophila abortus), this protein is tRNA dimethylallyltransferase.